A 508-amino-acid chain; its full sequence is Photosystem II CP47 reaction center protein (508 aa).

Transmembrane regions (helical) follow at residues 21 to 36 (AVHL…WAGS), 101 to 115 (IVLS…IWHW), 140 to 156 (GIHL…FGAF), 203 to 218 (IAAG…FHLS), 237 to 252 (VLSS…AFVV), and 457 to 472 (TFAL…HGAR).

This sequence belongs to the PsbB/PsbC family. PsbB subfamily. PSII is composed of 1 copy each of membrane proteins PsbA, PsbB, PsbC, PsbD, PsbE, PsbF, PsbH, PsbI, PsbJ, PsbK, PsbL, PsbM, PsbT, PsbX, PsbY, PsbZ, Psb30/Ycf12, at least 3 peripheral proteins of the oxygen-evolving complex and a large number of cofactors. It forms dimeric complexes. The cofactor is Binds multiple chlorophylls. PSII binds additional chlorophylls, carotenoids and specific lipids..

Its subcellular location is the plastid. The protein localises to the chloroplast thylakoid membrane. One of the components of the core complex of photosystem II (PSII). It binds chlorophyll and helps catalyze the primary light-induced photochemical processes of PSII. PSII is a light-driven water:plastoquinone oxidoreductase, using light energy to abstract electrons from H(2)O, generating O(2) and a proton gradient subsequently used for ATP formation. This Marchantia polymorpha (Common liverwort) protein is Photosystem II CP47 reaction center protein.